A 308-amino-acid polypeptide reads, in one-letter code: Transmembrane and ubiquitin-like domain-containing protein 1 (308 aa).

A helical membrane pass occupies residues 11-31 (VTVLFALVLFFMVLMLAWVST). A disordered region spans residues 39-162 (THWIRPEPAQ…GLGDGTTAQS (124 aa)). Polar residues predominate over residues 63–93 (PSQTLTNADPNSETVDSSDSTQSSREFQNAG). Residues 103–115 (SSSGSTVSTGGSV) are compositionally biased toward low complexity. Residues 132–149 (PNFTVSSRDPQAGASSSL) are compositionally biased toward polar residues. Residues 169–242 (IHLRLKFLND…LHCHISQHAS (74 aa)) enclose the Ubiquitin-like domain. 2 helical membrane-spanning segments follow: residues 253-273 (VPLNVGNLLVPLLFLIVMLLW) and 283-303 (FTGTATACLGGFTLLISAIAF).

The protein localises to the membrane. Its subcellular location is the cytoplasm. It is found in the nucleus. In terms of biological role, may contribute to the regulation of translation during cell-cycle progression. May contribute to the regulation of cell proliferation. The membrane form is involved in sterol-regulated ubiquitination and degradation of HMG-CoA reductase HMGCR. May be involved in centrosome assembly. The chain is Transmembrane and ubiquitin-like domain-containing protein 1 (tmub1) from Xenopus laevis (African clawed frog).